A 311-amino-acid polypeptide reads, in one-letter code: Ferritin-like catalase Nec2 (311 aa).

Residues Met1 to Ser25 form the signal peptide. N-linked (GlcNAc...) asparagine glycans are attached at residues Asn128, Asn257, and Asn289.

Forms homomultimers. As to expression, observed in all flowers organs; mainly expressed in nectaries and, to a lower extent, in petals and ovules, as well as in stigmas and calyx at low levels.

It catalyses the reaction 2 H2O2 = O2 + 2 H2O. In terms of biological role, involved in the production of blood-red nectar containing the alkaloid nesocodin and that serves as a visual attractant for pollinator visitation, including vertebrates such as Phelsuma geckos. The nectar is initially acidic and pale yellow, but slowly becomes alkaline before turning into red within 24 hours. Together with NEC1 and NEC3, facilitates the condensation of sinapaldehyde ((E)-3,5-dimethoxy-4-hydroxycinnamaldehyde) and proline to form nesocodin, a pigment with a stable imine bond. Protects nesocodin from degradation by hydrogen peroxide H(2)O(2) by catalyzing the degradation of H(2)O(2) into water H(2)O and dioxygene O(2). The chain is Ferritin-like catalase Nec2 from Nesocodon mauritianus (Blue Mauritius bellflower).